A 1491-amino-acid polypeptide reads, in one-letter code: Pleckstrin homology domain-containing family H member 2 (1491 aa).

Positions 19-177 form a coiled coil; sequence ALEAQLMKFR…ELQEKKISCV (159 aa). 3 disordered regions span residues 232–435, 506–546, and 612–668; these read AEKP…PFQP, DDGL…LHRF, and SSSP…SDYA. Positions 253–264 are enriched in polar residues; the sequence is TSCSSEQNQKTR. Residues 374–385 are compositionally biased toward basic and acidic residues; that stretch reads KEQDSSSDELNK. Positions 392 to 406 are enriched in polar residues; sequence LDYTSSSSEANTPSP. Residues 657-666 show a composition bias toward low complexity; that stretch reads SDSSAASESD. PH domains are found at residues 702–796 and 810–918; these read PLEK…SVLR and KPAV…VAAG. The region spanning 954 to 1109 is the MyTH4 domain; the sequence is HSKEGILSPL…PSRMEILSTL (156 aa). An FERM domain is found at 1120–1449; the sequence is FSIPVHFMNG…SYINSFHQQK (330 aa). Residues 1466-1491 are disordered; it reads QAPQARVMGSQPPLSNSRPTKGPTLL.

As to quaternary structure, self-associates. Interacts with TGFB1I1. In terms of tissue distribution, expressed in the kidney and testis. Expressed in the kidney exclusively by glomerular podocytes.

The protein resides in the cytoplasm. It localises to the cytoskeleton. The protein localises to the cell membrane. Its subcellular location is the cell projection. It is found in the lamellipodium. In terms of biological role, in the kidney glomerulus may play a role in linking podocyte foot processes to the glomerular basement membrane. May be involved in stabilization of F-actin by attenuating its depolymerization. Can recruit TGFB1I1 from focal adhesions to podocyte lamellipodia. The polypeptide is Pleckstrin homology domain-containing family H member 2 (Plekhh2) (Mus musculus (Mouse)).